A 142-amino-acid polypeptide reads, in one-letter code: Transcriptional regulator MraZ (142 aa).

2 SpoVT-AbrB domains span residues 5 to 51 and 77 to 120; these read SSAL…PRPE and AQDV…DAAS.

It belongs to the MraZ family. As to quaternary structure, forms oligomers.

It localises to the cytoplasm. Its subcellular location is the nucleoid. The sequence is that of Transcriptional regulator MraZ from Bordetella bronchiseptica (strain ATCC BAA-588 / NCTC 13252 / RB50) (Alcaligenes bronchisepticus).